The primary structure comprises 200 residues: Holliday junction resolvase RecU (200 aa).

Positions 1–24 (MTIRYPNGKRYDQASQPHKTPIKK) are disordered. Residues Thr-85, Asp-87, Glu-100, and Gln-119 each contribute to the Mg(2+) site.

The protein belongs to the RecU family. Mg(2+) is required as a cofactor.

It is found in the cytoplasm. It catalyses the reaction Endonucleolytic cleavage at a junction such as a reciprocal single-stranded crossover between two homologous DNA duplexes (Holliday junction).. Functionally, endonuclease that resolves Holliday junction intermediates in genetic recombination. Cleaves mobile four-strand junctions by introducing symmetrical nicks in paired strands. Promotes annealing of linear ssDNA with homologous dsDNA. Required for DNA repair, homologous recombination and chromosome segregation. This Bacillus mycoides (strain KBAB4) (Bacillus weihenstephanensis) protein is Holliday junction resolvase RecU.